Here is a 383-residue protein sequence, read N- to C-terminus: Lipid-A-disaccharide synthase (383 aa).

This sequence belongs to the LpxB family.

The catalysed reaction is a lipid X + a UDP-2-N,3-O-bis[(3R)-3-hydroxyacyl]-alpha-D-glucosamine = a lipid A disaccharide + UDP + H(+). Its pathway is bacterial outer membrane biogenesis; LPS lipid A biosynthesis. Condensation of UDP-2,3-diacylglucosamine and 2,3-diacylglucosamine-1-phosphate to form lipid A disaccharide, a precursor of lipid A, a phosphorylated glycolipid that anchors the lipopolysaccharide to the outer membrane of the cell. This chain is Lipid-A-disaccharide synthase, found in Syntrophus aciditrophicus (strain SB).